The following is a 485-amino-acid chain: MTITPQHLIALLPLLIVGLTVVVVMLSIAWRRNHFLNATLSVIGLNAALVSLWFVGQAGAMDVTPLMRVDGFAMLYTGLVLLASLATCTFAYPWLEGYNDNQEEFYLLVLIAALGGILLANANHLAALFLGIELISLPLFGLIGYAFRQKRSLEASIKYTILSAAASSFLLFGMALVYAQSGNLSFVALGKSLGDGMLHEPLLLAGFGLMIVGLGFKLSLVPFHLWTPDVYQGAPAPVSTFLATASKIAIFGVVMRLFLYAPVGDSEAVRIVLGVIAFASIIFGNLMALSQTNIKRLLGYSSISHLGYLLVALIALQSGEMSMEAVGVYLAGYLFSSLGAFGVVSLMSSPFRGPDADSLFSYRGLFWHRPILAAVMTVMMLSLAGIPMTLGFIGKFYVLAVGVQASLWWLVAAVVVGSAIGLYYYLRVAVSLYLSAPQQLNRDAPSNWQYSAGGIVVLISALLVLVLGIYPQPLISIVQLATPLM.

14 helical membrane passes run 8–28, 35–55, 71–91, 105–125, 127–147, 159–179, 203–223, 235–255, 271–291, 297–317, 326–346, 373–393, 408–430, and 455–475; these read LIAL…MLSI, FLNA…LWFV, GFAM…CTFA, FYLL…ANHL, ALFL…GYAF, YTIL…LVYA, LLAG…LVPF, PAPV…GVVM, IVLG…ALSQ, LLGY…IALQ, VGVY…VVSL, AAVM…LGFI, WWLV…RVAV, and IVVL…QPLI.

Belongs to the complex I subunit 2 family. In terms of assembly, NDH-1 is composed of 13 different subunits. Subunits NuoA, H, J, K, L, M, N constitute the membrane sector of the complex.

Its subcellular location is the cell inner membrane. The enzyme catalyses a quinone + NADH + 5 H(+)(in) = a quinol + NAD(+) + 4 H(+)(out). Its function is as follows. NDH-1 shuttles electrons from NADH, via FMN and iron-sulfur (Fe-S) centers, to quinones in the respiratory chain. The immediate electron acceptor for the enzyme in this species is believed to be ubiquinone. Couples the redox reaction to proton translocation (for every two electrons transferred, four hydrogen ions are translocated across the cytoplasmic membrane), and thus conserves the redox energy in a proton gradient. The polypeptide is NADH-quinone oxidoreductase subunit N (Citrobacter koseri (strain ATCC BAA-895 / CDC 4225-83 / SGSC4696)).